A 146-amino-acid polypeptide reads, in one-letter code: MPGARFVRFSLRLTQEFKENVVAHVDHLMGLRALIDGKVTSADVRRFGFLSRNVLVSACMAVNVQVYAPDATIDMRHQPTIYFRVCQNCHAMADVPAPDDHSIARYLLAECGAVLVIDHPLDVFGETEEGVNELLEVQRINAGGDL.

This is an uncharacterized protein from Orgyia pseudotsugata (Douglas-fir tussock moth).